Consider the following 535-residue polypeptide: ATP-dependent RNA helicase DBP3 (535 aa).

The span at 1–21 (MSKHELKDKKRKSVDGEDVSK) shows a compositional bias: basic and acidic residues. The interval 1-82 (MSKHELKDKK…GSETAPVGDS (82 aa)) is disordered. Basic residues predominate over residues 22-33 (SKKVKKDKKDKK). Residues 34-72 (DKKAKDGNDKVKDKKDKNKKDKSKTDKNLKEVQETEAHT) show a composition bias toward basic and acidic residues. The Q motif motif lies at 125 to 151 (LSFSHLNLHSAIQKEISKFPKPTPIQA). The region spanning 154–327 (WPYLLAGKDV…STFMRAPVKV (174 aa)) is the Helicase ATP-binding domain. 167–174 (AETGSGKT) serves as a coordination point for ATP. The DEAD box motif lies at 274 to 277 (DEAD). One can recognise a Helicase C-terminal domain in the interval 352–505 (KKEKRLLELL…PVPEELMKFG (154 aa)).

The protein belongs to the DEAD box helicase family. DDX5/DBP2 subfamily.

It localises to the nucleus. The protein resides in the nucleolus. It catalyses the reaction ATP + H2O = ADP + phosphate + H(+). In terms of biological role, ATP-dependent RNA helicase required for 60S ribosomal subunit synthesis. Involved in efficient pre-rRNA processing, predominantly at site A3, which is necessary for the normal formation of 25S and 5.8S rRNAs. The protein is ATP-dependent RNA helicase DBP3 (DBP3) of Eremothecium gossypii (strain ATCC 10895 / CBS 109.51 / FGSC 9923 / NRRL Y-1056) (Yeast).